The following is a 124-amino-acid chain: QXGDLVAAGKKVYRQCHACHSVGEGAKNRVGPEQNNLFGRVAGSLPDFRYSKAMKSAGENGLVWTDKSLHEYLKNPRAYVPKTKMIFAGLKKPEDIDAVVAYLKTFDTDGMPDPDASTYTPPNG.

The residue at position 1 (Q1) is a Pyrrolidone carboxylic acid. 4 residues coordinate heme c: C16, C19, H20, and M85.

The protein belongs to the cytochrome c family. In terms of processing, binds 1 heme c group covalently per subunit.

Its subcellular location is the periplasm. In terms of biological role, cytochrome c2 is found mainly in purple, non-sulfur, photosynthetic bacteria where it functions as the electron donor to the oxidized bacteriochlorophyll in the photophosphorylation pathway. However, it may also have a role in the respiratory chain and is found in some non-photosynthetic bacteria. The polypeptide is Cytochrome c2 (Afifella marina (Rhodobium marinum)).